The sequence spans 125 residues: Small ribosomal subunit protein mS41 (125 aa).

A mitochondrion-targeting transit peptide spans 1–10 (MLSIFGCVRA). The interval 103–125 (SFFGGERNRKATVAKWRAEQRNK) is disordered.

The protein belongs to the mitochondrion-specific ribosomal protein mS41 family.

The protein resides in the mitochondrion. Its function is as follows. Involved in telomere length regulation. This chain is Small ribosomal subunit protein mS41 (FYV4), found in Candida glabrata (strain ATCC 2001 / BCRC 20586 / JCM 3761 / NBRC 0622 / NRRL Y-65 / CBS 138) (Yeast).